A 300-amino-acid polypeptide reads, in one-letter code: UPF0282 protein TON_1363 (300 aa).

The protein belongs to the UPF0282 family.

The sequence is that of UPF0282 protein TON_1363 from Thermococcus onnurineus (strain NA1).